The primary structure comprises 243 residues: Ribonuclease PH (243 aa).

Residues arginine 91 and 129–131 (GTR) each bind phosphate.

The protein belongs to the RNase PH family. Homohexameric ring arranged as a trimer of dimers.

The catalysed reaction is tRNA(n+1) + phosphate = tRNA(n) + a ribonucleoside 5'-diphosphate. Phosphorolytic 3'-5' exoribonuclease that plays an important role in tRNA 3'-end maturation. Removes nucleotide residues following the 3'-CCA terminus of tRNAs; can also add nucleotides to the ends of RNA molecules by using nucleoside diphosphates as substrates, but this may not be physiologically important. Probably plays a role in initiation of 16S rRNA degradation (leading to ribosome degradation) during starvation. The polypeptide is Ribonuclease PH (Burkholderia thailandensis (strain ATCC 700388 / DSM 13276 / CCUG 48851 / CIP 106301 / E264)).